A 386-amino-acid chain; its full sequence is Short-chain dehydrogenase/reductase family 42E member 1 (386 aa).

Residue Y150 is the Proton acceptor of the active site. K154 contacts NAD(+). 2 helical membrane-spanning segments follow: residues 279–299 (FPLSLVYFFAFLTEWIHFFIS) and 363–383 (YLIWDIIFILLVTVVLLSWLP).

This sequence belongs to the 3-beta-HSD family.

Its subcellular location is the membrane. In Xenopus laevis (African clawed frog), this protein is Short-chain dehydrogenase/reductase family 42E member 1 (sdr42e1).